A 453-amino-acid polypeptide reads, in one-letter code: MVEIHLKNSKSRKVELLQPIEPGRVSLYLCGPTVYDRAHLGNARSAVVFDQLFRLLRHVYGAENVTFVRNFTDVDDKINARALAEGREIADLTAETSQWYLDDTRALGVLDPNHMPRATEYIAEMVAFIEDLIAKGFAYARDGHALFRVRSFDDYGKLSGRSVDDMIAGARVEVAPYKEDPMDFVLWKPSSDDIPGWDSPWGRGRPGWHIECSAMAHALLGEQFDIHGGGADLMFPHHENEVAQSCAAGHGFANIWMHNEMLQVEGKKMSKSLGNFFTVRDLLDQGVPGEVIRFVMLSTHYGKPMDWTEKKRAEAEATLRKWYAALRQSVAEQEATPHLVDSLADDLNTALAITTLHGMYETGNFGPLAGGLRLLGLWSGTVPDWSEIAEVDLTYFAGRFSSARAEAMVTKDFTDVDALKSALTAAGVEVRMSKDGVELVPGPTFDPAKLEDL.

A Zn(2+)-binding site is contributed by Cys30. The 'HIGH' region motif lies at 32–42 (PTVYDRAHLGN). Residues Cys212, His237, and Glu241 each contribute to the Zn(2+) site. Residues 268 to 272 (KMSKS) carry the 'KMSKS' region motif. An ATP-binding site is contributed by Lys271.

It belongs to the class-I aminoacyl-tRNA synthetase family. Monomer. The cofactor is Zn(2+).

It is found in the cytoplasm. It carries out the reaction tRNA(Cys) + L-cysteine + ATP = L-cysteinyl-tRNA(Cys) + AMP + diphosphate. This Jannaschia sp. (strain CCS1) protein is Cysteine--tRNA ligase.